The chain runs to 276 residues: C-type lectin domain family 12 member B (276 aa).

Residues 1–43 (MSEDMTYATLTFQDSVAAGNNQDRNNLRKRGYPAPSSIWRQAA) are Cytoplasmic-facing. The ITIM motif signature appears at 5–10 (MTYATL). Residue Y7 is modified to Phosphotyrosine. A helical; Signal-anchor for type II membrane protein transmembrane segment spans residues 44–64 (LGLLTLCVMLLIGLVTLGIMF). Topologically, residues 65 to 276 (LQMSSEINSD…AALVKIEDLD (212 aa)) are extracellular. N-linked (GlcNAc...) asparagine glycosylation is found at N91, N176, and N237. Positions 150–264 (YQTSCYYFAV…CSAEISWICE (115 aa)) constitute a C-type lectin domain. Intrachain disulfides connect C172–C263 and C242–C255.

In terms of assembly, homodimer. Interacts (via ITIM motif) with PTPN6. Interacts (via ITIM motif) with PTPN11; this interaction triggers dephosphorylation and activation of PTPN11.

It is found in the cell membrane. Its function is as follows. Inhibitory receptor postulated to negatively regulate immune and non-immune functions. Upon phosphorylation, recruits SH2 domain-containing PTPN6 and PTPN11 phosphatases to its ITIM motif and antagonizes activation signals. Although it inhibits KLRK1/NKG2D-mediated signaling, it does not bind known ligands of KLRK1/NKG2D and therefore is not its inhibitory counterpart. May limit activation of myeloid cell subsets in response to infection or tissue inflammation. May protect target cells against natural killer cell-mediated lysis. May negatively regulate cell cycle and differentiation of melanocytes via inactivation of STAT3. This chain is C-type lectin domain family 12 member B (CLEC12B), found in Bos taurus (Bovine).